Consider the following 683-residue polypeptide: Leishmanolysin-like peptidase (683 aa).

Residue His257 coordinates Zn(2+). The active site involves Glu258. Residues His261 and His364 each contribute to the Zn(2+) site.

This sequence belongs to the peptidase M8 family. Zn(2+) is required as a cofactor.

It localises to the cytoplasm. Essential for the coordination of mitotic progression, and also plays a role in cell migration. The polypeptide is Leishmanolysin-like peptidase (Invadolysin) (Drosophila melanogaster (Fruit fly)).